Here is a 311-residue protein sequence, read N- to C-terminus: MHQKLLKSAHYIELGSYQYWPVLVPRGIRLYTYEQIPGSLKDNPYITDGYRAYLPSRLCIKSLFILSNETVNIWSHLLGFFLFFTLGIYDMTSVLPSASASREDFVICSICLFCFQVCMLCSVGYHLFSCHRSEKTCRRWMALDYAGISIGILGCYVSGVFYAFYCNNYWRQVYLITVLAMILAVFFAQIHPNYLTQQWQRLRSIIFCSVSGYGVIPTLHWVWLNGGIGAPIVQDFAPRVIVMYMIALLAFLFYISKVPERYFPGQLNYLGSSHQIWHILAVVMLYWWHQSTVYVMQYRHSKPCPDYVSHL.

Residues 1–20 are required for interaction with SREBF2; the sequence is MHQKLLKSAHYIELGSYQYW. Residues 1 to 73 lie on the Cytoplasmic side of the membrane; the sequence is MHQKLLKSAH…FILSNETVNI (73 aa). The interval 41–60 is required for interaction with SCAP; sequence KDNPYITDGYRAYLPSRLCI. The golgi targeting stretch occupies residues 61–71; it reads KSLFILSNETV. The helical transmembrane segment at 74 to 96 threads the bilayer; the sequence is WSHLLGFFLFFTLGIYDMTSVLP. Residues 97-105 are Lumenal-facing; that stretch reads SASASREDF. The helical transmembrane segment at 106 to 128 threads the bilayer; the sequence is VICSICLFCFQVCMLCSVGYHLF. The Cytoplasmic portion of the chain corresponds to 129–140; sequence SCHRSEKTCRRW. Residues 141 to 163 form a helical membrane-spanning segment; the sequence is MALDYAGISIGILGCYVSGVFYA. The Lumenal segment spans residues 164–172; the sequence is FYCNNYWRQ. Residues 173-195 form a helical membrane-spanning segment; sequence VYLITVLAMILAVFFAQIHPNYL. Residues 196 to 201 lie on the Cytoplasmic side of the membrane; it reads TQQWQR. The chain crosses the membrane as a helical span at residues 202 to 224; that stretch reads LRSIIFCSVSGYGVIPTLHWVWL. At 225–238 the chain is on the lumenal side; the sequence is NGGIGAPIVQDFAP. The helical transmembrane segment at 239-256 threads the bilayer; the sequence is RVIVMYMIALLAFLFYIS. Topologically, residues 257–275 are cytoplasmic; the sequence is KVPERYFPGQLNYLGSSHQ. A helical transmembrane segment spans residues 276-298; that stretch reads IWHILAVVMLYWWHQSTVYVMQY. Residues 299-303 form a golgi targeting region; that stretch reads RHSKP. The Lumenal segment spans residues 299–311; the sequence is RHSKPCPDYVSHL.

This sequence belongs to the ADIPOR family. Interacts with SCAP and SREBF2; the interactions are direct, increase in low cholesterol conditions and tether SCAP:SREBP complex to the Golgi apparatus. Interaction with SCAP is mutually exclusive with INSIG1. In hepatocytes, interacts with PPARA and HUWE1; the interactions promote PPARA poylubiquitination and HUWE1-mediated degradation. In macrophages, interacts with PPARG and STUB1; the interactions promote PPARG poylubiquitination and STUB1-mediated degradation. Widely expressed in a range of tissues.

The protein resides in the golgi apparatus membrane. Its function is as follows. Golgi-scaffold protein which modulates its interactors acitivies by anchoring them to the Golgi apparatus. Functions as a spatial regulator of RAF1 kinase by sequestrating it to the Golgi apparatus. Acts as a positive regulator of cholesterol biosynthesis by mediating the anchoring of the SCAP:SREBP complex in the Golgi apparatus, thereby promoting SCAP:SREBF2 complex formation, potentiating SREBF2 and SREBF1 processing and enhancing lipid synthesis. Also regulates PPARA and PPARG functions by mediating their interaction with E3 ubiquitin ligases, such as STUB1 or HUWE1, leading to their polyubiquitination and proteasome-mediated degradation. The polypeptide is Progestin and adipoQ receptor family member 3 (Homo sapiens (Human)).